Reading from the N-terminus, the 231-residue chain is Elongation factor 1-delta 1 (231 aa).

A2 is modified (N-acetylalanine). Positions 10–73 constitute a GST C-terminal domain; sequence DAGLKKLDEH…LRISGVSAEG (64 aa). Disordered stretches follow at residues 85–108 and 116–135; these read TEEAVATPPAADSKDAAADEEDDD and ETEEEKKAAEERAASVKAST. Residues 119–129 show a composition bias toward basic and acidic residues; that stretch reads EEKKAAEERAA.

This sequence belongs to the EF-1-beta/EF-1-delta family. In terms of assembly, EF-1 is composed of 4 subunits: alpha, beta (1B-alpha=beta'), delta (1B-beta), and gamma (1B-gamma).

In terms of biological role, EF-1-beta and EF-1-delta stimulate the exchange of GDP bound to EF-1-alpha to GTP. The sequence is that of Elongation factor 1-delta 1 from Arabidopsis thaliana (Mouse-ear cress).